Reading from the N-terminus, the 356-residue chain is Leucoanthocyanidin dioxygenase (356 aa).

2 residues coordinate substrate: Y142 and K213. Residues 208–307 (LLLQMKINYY…RISWAVFCEP (100 aa)) enclose the Fe2OG dioxygenase domain. 215–217 (NYY) contacts 2-oxoglutarate. Residue H232 participates in Fe cation binding. Residue T233 participates in substrate binding. The Fe cation site is built by D234 and H288. A 2-oxoglutarate-binding site is contributed by 298-300 (RIS). Residues E306 and K341 each contribute to the substrate site.

The protein belongs to the iron/ascorbate-dependent oxidoreductase family. The cofactor is L-ascorbate. Fe(2+) is required as a cofactor. As to expression, expressed in young seedlings (at protein level).

It catalyses the reaction a (2R,3S,4S)-leucoanthocyanidin + 2-oxoglutarate + O2 = a 4-H-anthocyanidin with a 3-hydroxy group + succinate + CO2 + 2 H2O. The catalysed reaction is (2R,3S,4S)-3,4-leucopelargonidin + 2-oxoglutarate + O2 = (4S)-2,3-dehydroleucopelargonidin + succinate + CO2 + H2O + H(+). It carries out the reaction (2R,3S,4S)-leucocyanidin + 2-oxoglutarate + O2 = (4S)-2,3-dehydroleucocyanidin + succinate + CO2 + H2O + H(+). The protein operates within pigment biosynthesis; anthocyanin biosynthesis. Functionally, involved in anthocyanin and protoanthocyanidin biosynthesis by catalyzing the oxidation of leucoanthocyanidins into anthocyanidins. Possesses low flavonol synthase activity in vitro towards dihydrokaempferol and dihydroquercetin producing kaempferol and quercitin, respectively. The protein is Leucoanthocyanidin dioxygenase (LDOX) of Arabidopsis thaliana (Mouse-ear cress).